The sequence spans 686 residues: Heat shock 70 kDa protein 12B (686 aa).

The disordered stretch occupies residues Leu12–Ala53. A phosphoserine mark is found at Ser25 and Ser29. Position 42 is a phosphothreonine (Thr42). 3 positions are modified to phosphoserine: Ser44, Ser46, and Ser276.

This sequence belongs to the heat shock protein 70 family. Highest expression in muscle and heart. Lower levels in liver and kidney.

The chain is Heat shock 70 kDa protein 12B (HSPA12B) from Homo sapiens (Human).